The primary structure comprises 258 residues: Glycerol-3-phosphate acyltransferase (258 aa).

Transmembrane regions (helical) follow at residues 11–31 (IILASVIGYFLGSISWSIIIV), 62–82 (LVVAFLDALKVVFTAIVAILL), 94–114 (SYFIPCIFALIGHCYPIYYKF), 124–144 (LGLLFVVNVLYLIIFLIIWFI), 160–180 (ALIILLIMWIPYLSGVSYFIW), and 212–232 (WASGILEGNIIILIGGLILAW).

Belongs to the PlsY family. As to quaternary structure, probably interacts with PlsX.

It localises to the cell membrane. The enzyme catalyses an acyl phosphate + sn-glycerol 3-phosphate = a 1-acyl-sn-glycero-3-phosphate + phosphate. The protein operates within lipid metabolism; phospholipid metabolism. In terms of biological role, catalyzes the transfer of an acyl group from acyl-phosphate (acyl-PO(4)) to glycerol-3-phosphate (G3P) to form lysophosphatidic acid (LPA). This enzyme utilizes acyl-phosphate as fatty acyl donor, but not acyl-CoA or acyl-ACP. The polypeptide is Glycerol-3-phosphate acyltransferase (Mycoplasma mycoides subsp. mycoides SC (strain CCUG 32753 / NCTC 10114 / PG1)).